A 238-amino-acid chain; its full sequence is tRNA (guanine-N(7)-)-methyltransferase (238 aa).

S-adenosyl-L-methionine-binding residues include Glu68, Glu93, Asp120, and Asp143. Asp143 is a catalytic residue. Substrate contacts are provided by residues Lys147, Asp179, and Thr216 to Glu219.

It belongs to the class I-like SAM-binding methyltransferase superfamily. TrmB family.

It catalyses the reaction guanosine(46) in tRNA + S-adenosyl-L-methionine = N(7)-methylguanosine(46) in tRNA + S-adenosyl-L-homocysteine. The protein operates within tRNA modification; N(7)-methylguanine-tRNA biosynthesis. Catalyzes the formation of N(7)-methylguanine at position 46 (m7G46) in tRNA. The polypeptide is tRNA (guanine-N(7)-)-methyltransferase (Shewanella sp. (strain MR-4)).